We begin with the raw amino-acid sequence, 523 residues long: Cytoplasmic dynein 1 light intermediate chain 1 (523 aa).

Residues 1 to 25 (MAAVGRVGSFGSSPPGLSSTYTGGP) are disordered. Positions 9–19 (SFGSSPPGLSS) are enriched in low complexity. An ATP-binding site is contributed by 74–81 (GEDGAGKT). The residue at position 207 (Ser207) is a Phosphoserine. Thr213 carries the post-translational modification Phosphothreonine. 2 disordered regions span residues 387–434 (PPTA…DPNM) and 456–523 (TGSP…GEAS). Phosphoserine is present on residues Ser398 and Ser405. The residue at position 408 (Thr408) is a Phosphothreonine. Ser412, Ser419, Ser421, and Ser427 each carry phosphoserine. The span at 412-421 (SVSSNVASVS) shows a compositional bias: low complexity. The span at 458–478 (SPGGPGVSGGSPAGGAGGGSS) shows a compositional bias: gly residues. Ser487 is subject to Phosphoserine. The segment covering 493-503 (LDVHAELDRIT) has biased composition (basic and acidic residues). Residues 506–523 (PVTVSPTTPTSPTEGEAS) are compositionally biased toward low complexity. Ser510 bears the Phosphoserine mark. Phosphothreonine is present on residues Thr512, Thr513, and Thr515. Ser516 is subject to Phosphoserine.

The protein belongs to the dynein light intermediate chain family. Homodimer. The cytoplasmic dynein 1 complex consists of two catalytic heavy chains (HCs) and a number of non-catalytic subunits presented by intermediate chains (ICs), light intermediate chains (LICs) and light chains (LCs); the composition seems to vary in respect to the IC, LIC and LC composition. The heavy chain homodimer serves as a scaffold for the probable homodimeric assembly of the respective non-catalytic subunits. The ICs and LICs bind directly to the HC dimer and the LCs assemble on the IC dimer. Self-associates. Interacts with DYNC1H1; DYNC1LI1 and DYNC1LI2 bind mutually exclusive to DYNC1H1. Interacts with PCNT. Forms a complex with RAB11FIP3 and RAB11A1; the interaction between DYNC1LI1 and RAB11FIP3 is direct and induces DYNC1LI1 localization onto endosomal membrane; the complex regulates endocytic trafficking. Interacts with RUFY3. As to quaternary structure, (Microbial infection) Interacts with human adenovirus 5 hexon protein; this interaction probably allows virus intracellular transport. In terms of processing, phosphorylated during mitosis but not in interphase.

Its subcellular location is the cytoplasm. The protein resides in the chromosome. It localises to the centromere. The protein localises to the kinetochore. It is found in the cytoskeleton. Its subcellular location is the spindle pole. The protein resides in the recycling endosome membrane. In terms of biological role, acts as one of several non-catalytic accessory components of the cytoplasmic dynein 1 complex that are thought to be involved in linking dynein to cargos and to adapter proteins that regulate dynein function. Cytoplasmic dynein 1 acts as a motor for the intracellular retrograde motility of vesicles and organelles along microtubules. May play a role in binding dynein to membranous organelles or chromosomes. Probably involved in the microtubule-dependent transport of pericentrin. Is required for progress through the spindle assembly checkpoint. The phosphorylated form appears to be involved in the selective removal of MAD1L1 and MAD1L2 but not BUB1B from kinetochores. Forms a functional Rab11/RAB11FIP3/dynein complex onto endosomal membrane that regulates the movement of peripheral sorting endosomes (SE) along microtubule tracks toward the microtubule organizing center/centrosome, generating the endosomal recycling compartment (ERC). The sequence is that of Cytoplasmic dynein 1 light intermediate chain 1 (DYNC1LI1) from Homo sapiens (Human).